A 232-amino-acid chain; its full sequence is Large ribosomal subunit protein uL1 (232 aa).

Belongs to the universal ribosomal protein uL1 family. In terms of assembly, part of the 50S ribosomal subunit.

In terms of biological role, binds directly to 23S rRNA. The L1 stalk is quite mobile in the ribosome, and is involved in E site tRNA release. Functionally, protein L1 is also a translational repressor protein, it controls the translation of the L11 operon by binding to its mRNA. In Bartonella henselae (strain ATCC 49882 / DSM 28221 / CCUG 30454 / Houston 1) (Rochalimaea henselae), this protein is Large ribosomal subunit protein uL1.